We begin with the raw amino-acid sequence, 642 residues long: Threonine--tRNA ligase (642 aa).

Residues 1 to 61 form the TGS domain; it reads MPVITLPDGS…ENDATLAIIT (61 aa). The segment at 243-534 is catalytic; the sequence is DHRKIGKQLD…LTEEFAGFFP (292 aa). The Zn(2+) site is built by Cys334, His385, and His511.

Belongs to the class-II aminoacyl-tRNA synthetase family. As to quaternary structure, homodimer. It depends on Zn(2+) as a cofactor.

It localises to the cytoplasm. The catalysed reaction is tRNA(Thr) + L-threonine + ATP = L-threonyl-tRNA(Thr) + AMP + diphosphate + H(+). In terms of biological role, catalyzes the attachment of threonine to tRNA(Thr) in a two-step reaction: L-threonine is first activated by ATP to form Thr-AMP and then transferred to the acceptor end of tRNA(Thr). Also edits incorrectly charged L-seryl-tRNA(Thr). This Salmonella gallinarum (strain 287/91 / NCTC 13346) protein is Threonine--tRNA ligase.